We begin with the raw amino-acid sequence, 101 residues long: Aspartyl/glutamyl-tRNA(Asn/Gln) amidotransferase subunit C (101 aa).

It belongs to the GatC family. As to quaternary structure, heterotrimer of A, B and C subunits.

The catalysed reaction is L-glutamyl-tRNA(Gln) + L-glutamine + ATP + H2O = L-glutaminyl-tRNA(Gln) + L-glutamate + ADP + phosphate + H(+). It carries out the reaction L-aspartyl-tRNA(Asn) + L-glutamine + ATP + H2O = L-asparaginyl-tRNA(Asn) + L-glutamate + ADP + phosphate + 2 H(+). Its function is as follows. Allows the formation of correctly charged Asn-tRNA(Asn) or Gln-tRNA(Gln) through the transamidation of misacylated Asp-tRNA(Asn) or Glu-tRNA(Gln) in organisms which lack either or both of asparaginyl-tRNA or glutaminyl-tRNA synthetases. The reaction takes place in the presence of glutamine and ATP through an activated phospho-Asp-tRNA(Asn) or phospho-Glu-tRNA(Gln). The chain is Aspartyl/glutamyl-tRNA(Asn/Gln) amidotransferase subunit C from Lactococcus lactis subsp. cremoris (strain MG1363).